The sequence spans 481 residues: Aspartyl/glutamyl-tRNA(Asn/Gln) amidotransferase subunit B (481 aa).

It belongs to the GatB/GatE family. GatB subfamily. In terms of assembly, heterotrimer of A, B and C subunits.

The catalysed reaction is L-glutamyl-tRNA(Gln) + L-glutamine + ATP + H2O = L-glutaminyl-tRNA(Gln) + L-glutamate + ADP + phosphate + H(+). It carries out the reaction L-aspartyl-tRNA(Asn) + L-glutamine + ATP + H2O = L-asparaginyl-tRNA(Asn) + L-glutamate + ADP + phosphate + 2 H(+). Functionally, allows the formation of correctly charged Asn-tRNA(Asn) or Gln-tRNA(Gln) through the transamidation of misacylated Asp-tRNA(Asn) or Glu-tRNA(Gln) in organisms which lack either or both of asparaginyl-tRNA or glutaminyl-tRNA synthetases. The reaction takes place in the presence of glutamine and ATP through an activated phospho-Asp-tRNA(Asn) or phospho-Glu-tRNA(Gln). In Ehrlichia ruminantium (strain Gardel), this protein is Aspartyl/glutamyl-tRNA(Asn/Gln) amidotransferase subunit B.